Consider the following 278-residue polypeptide: Undecaprenyl-diphosphatase 2 (278 aa).

7 helical membrane passes run 1 to 21 (MSII…FLPI), 38 to 58 (FPGF…VILY), 85 to 105 (FMFA…GLLL), 118 to 138 (FIAG…RFFV), 191 to 211 (SFLL…GDLL), 223 to 243 (PLII…IWLI), and 251 to 271 (LIYF…YFDH).

The protein belongs to the UppP family.

The protein resides in the cell membrane. It catalyses the reaction di-trans,octa-cis-undecaprenyl diphosphate + H2O = di-trans,octa-cis-undecaprenyl phosphate + phosphate + H(+). Catalyzes the dephosphorylation of undecaprenyl diphosphate (UPP). Confers resistance to bacitracin. The chain is Undecaprenyl-diphosphatase 2 from Halalkalibacterium halodurans (strain ATCC BAA-125 / DSM 18197 / FERM 7344 / JCM 9153 / C-125) (Bacillus halodurans).